Consider the following 335-residue polypeptide: Trans-1,2-dihydrobenzene-1,2-diol dehydrogenase (335 aa).

Belongs to the Gfo/Idh/MocA family. In terms of assembly, homodimer.

It catalyses the reaction (1R,2R)-1,2-dihydrobenzene-1,2-diol + NADP(+) = catechol + NADPH + H(+). It carries out the reaction D-xylose + NADP(+) = D-xylono-1,5-lactone + NADPH + H(+). The polypeptide is Trans-1,2-dihydrobenzene-1,2-diol dehydrogenase (DHDH) (Bos taurus (Bovine)).